Reading from the N-terminus, the 464-residue chain is NADH dehydrogenase [ubiquinone] flavoprotein 1, mitochondrial (464 aa).

Residues 1–20 (MLATRRLLGWSLPARVSVRF) constitute a mitochondrion transit peptide. The residue at position 81 (lysine 81) is an N6-acetyllysine; alternate. The residue at position 81 (lysine 81) is an N6-succinyllysine; alternate. Residue 87–96 (GRGGAGFPTG) participates in NADH binding. At lysine 104 the chain carries N6-acetyllysine. 199-247 (RGAGAYICGEETALIESIEGKQGKPRLKPPFPADVGVFGCPTTVANVET) lines the FMN pocket. The residue at position 257 (arginine 257) is an Omega-N-methylarginine. Position 375 is an N6-acetyllysine (lysine 375). The [4Fe-4S] cluster site is built by cysteine 379, cysteine 382, cysteine 385, and cysteine 425.

Belongs to the complex I 51 kDa subunit family. As to quaternary structure, core subunit of respiratory chain NADH dehydrogenase (Complex I) which is composed of 45 different subunits. This is a component of the flavoprotein-sulfur (FP) fragment of the enzyme. Interacts with RAB5IF. FMN is required as a cofactor. The cofactor is [4Fe-4S] cluster.

The protein localises to the mitochondrion inner membrane. It carries out the reaction a ubiquinone + NADH + 5 H(+)(in) = a ubiquinol + NAD(+) + 4 H(+)(out). Functionally, core subunit of the mitochondrial membrane respiratory chain NADH dehydrogenase (Complex I) which catalyzes electron transfer from NADH through the respiratory chain, using ubiquinone as an electron acceptor. Part of the peripheral arm of the enzyme, where the electrons from NADH are accepted by flavin mononucleotide (FMN) and then passed along a chain of iron-sulfur clusters by electron tunnelling to the final acceptor ubiquinone. Contains FMN, which is the initial electron acceptor as well as one iron-sulfur cluster. In Homo sapiens (Human), this protein is NADH dehydrogenase [ubiquinone] flavoprotein 1, mitochondrial.